Consider the following 419-residue polypeptide: Protein phosphatase methylesterase 1 (419 aa).

The segment covering 1–12 has biased composition (basic residues); that stretch reads MSQLHRGMHKKP. The disordered stretch occupies residues 1–75; it reads MSQLHRGMHK…KSAASPTVPA (75 aa). The span at 32 to 52 shows a compositional bias: acidic residues; the sequence is TETEETVECTEEEEEQDETDG. Residues Ser-230, Asp-256, and His-383 contribute to the active site.

Belongs to the AB hydrolase superfamily.

It carries out the reaction [phosphatase 2A protein]-C-terminal L-leucine methyl ester + H2O = [phosphatase 2A protein]-C-terminal L-leucine + methanol + H(+). Its function is as follows. Demethylates proteins that have been reversibly carboxymethylated. Demethylates the phosphatase PP2A catalytic subunit. The polypeptide is Protein phosphatase methylesterase 1 (PPE1) (Yarrowia lipolytica (strain CLIB 122 / E 150) (Yeast)).